The primary structure comprises 890 residues: Tyrosine-protein kinase receptor TYRO3 (890 aa).

The signal sequence occupies residues 1 to 40 (MALRRSMGRPGLPPLPLPPPPRLGLLLAALASLLLPESAA). Ig-like C2-type domains are found at residues 41-128 (AGLK…TEIS) and 139-220 (PFFT…ATVH). Residues 41–429 (AGLKLMGAPV…QGPPHSRTSW (389 aa)) lie on the Extracellular side of the membrane. Asparagine 63 carries an N-linked (GlcNAc...) asparagine glycan. Disulfide bonds link cysteine 64-cysteine 117 and cysteine 160-cysteine 203. N-linked (GlcNAc...) asparagine glycans are attached at residues asparagine 191, asparagine 230, asparagine 240, asparagine 293, asparagine 366, and asparagine 380. 2 consecutive Fibronectin type-III domains span residues 227-320 (APFN…TKGL) and 325-416 (APQN…SHDR). A helical transmembrane segment spans residues 430–450 (VPVVLGVLTALVTAAALALIL). Residues 451–890 (LRKRRKETRF…QQGLLPHSSC (440 aa)) lie on the Cytoplasmic side of the membrane. The residue at position 466 (serine 466) is a Phosphoserine. A Protein kinase domain is found at 518–790 (FTLGRMLGKG…CLRMELENIL (273 aa)). ATP is bound by residues 524–532 (LGKGEFGSV) and lysine 550. The active-site Proton acceptor is the aspartate 655. Phosphotyrosine; by autocatalysis is present on residues tyrosine 681, tyrosine 685, tyrosine 686, and tyrosine 804. 2 disordered regions span residues 815–837 (AGGS…GSGM) and 851–871 (LTPG…ESPL). 2 positions are modified to phosphoserine: serine 818 and serine 869.

This sequence belongs to the protein kinase superfamily. Tyr protein kinase family. AXL/UFO subfamily. Monomer and homodimer. Interacts (via N-terminus) with extracellular ligands TULP1 and GAS6. Interacts with PIK3R1; this interaction increases PI3-kinase activity. Post-translationally, autophosphorylated. Abundant in the brain and lower levels in other tissues.

Its subcellular location is the cell membrane. The catalysed reaction is L-tyrosyl-[protein] + ATP = O-phospho-L-tyrosyl-[protein] + ADP + H(+). Functionally, receptor tyrosine kinase that transduces signals from the extracellular matrix into the cytoplasm by binding to several ligands including TULP1 or GAS6. Regulates many physiological processes including cell survival, migration and differentiation. Ligand binding at the cell surface induces dimerization and autophosphorylation of TYRO3 on its intracellular domain that provides docking sites for downstream signaling molecules. Following activation by ligand, interacts with PIK3R1 and thereby enhances PI3-kinase activity. Activates the AKT survival pathway, including nuclear translocation of NF-kappa-B and up-regulation of transcription of NF-kappa-B-regulated genes. TYRO3 signaling plays a role in various processes such as neuron protection from excitotoxic injury, platelet aggregation and cytoskeleton reorganization. Also plays an important role in inhibition of Toll-like receptors (TLRs)-mediated innate immune response by activating STAT1, which selectively induces production of suppressors of cytokine signaling SOCS1 and SOCS3. (Microbial infection) Acts as a receptor for lassa virus and lymphocytic choriomeningitis virus, possibly through GAS6 binding to phosphatidyl-serine at the surface of virion envelope. In terms of biological role, (Microbial infection) Acts as a receptor for Ebolavirus, possibly through GAS6 binding to phosphatidyl-serine at the surface of virion envelope. The protein is Tyrosine-protein kinase receptor TYRO3 (TYRO3) of Homo sapiens (Human).